A 275-amino-acid polypeptide reads, in one-letter code: uncharacterized protein (275 aa).

A compositionally biased stretch (polar residues) spans 148–158; the sequence is TFPTTAPSITP. The interval 148 to 173 is disordered; the sequence is TFPTTAPSITPGNKEGEKTTSTDTDE. The helical transmembrane segment at 187 to 207 threads the bilayer; that stretch reads ILIAVTLLLSGVAIIVFVIFE. The segment at 234-264 is disordered; it reads GQPPGTAESKPDSQPQKVGQDAANSSNPKKA. The segment covering 245–261 has biased composition (polar residues); sequence DSQPQKVGQDAANSSNP.

It localises to the membrane. This is an uncharacterized protein from Homo sapiens (Human).